The following is a 312-amino-acid chain: Protoheme IX farnesyltransferase (312 aa).

Residues 1 to 36 lie on the Cytoplasmic side of the membrane; the sequence is MNKSNTAIDPTNVIEAGPDSSVADVQQKSWKDYLVL. Residues 37–55 form a helical membrane-spanning segment; the sequence is AKQGIVTSNLITTFAGIYL. Over 56 to 69 the chain is Extracellular; that stretch reads AIVYTGTVFTMHLD. The helical transmembrane segment at 70-88 threads the bilayer; the sequence is TMIFALLGAALVMAGGCTL. Residues 89 to 110 are Cytoplasmic-facing; the sequence is NNYIDRDIDHLMERTKERPTVT. A helical transmembrane segment spans residues 111 to 129; the sequence is GRFSAKHVLLVGLAQAALG. Residues 130 to 138 are Extracellular-facing; sequence IIFLALTTP. A helical transmembrane segment spans residues 139–157; it reads TAAVIGLIGLFIYVVLYTM. At 158–228 the chain is on the cytoplasmic side; the sequence is WTKRTTTLNT…YRAAGIPMLP (71 aa). The chain crosses the membrane as a helical span at residues 229-247; sequence VVAGFEMTKRQMVVYVAAL. The Extracellular segment spans residues 248-259; the sequence is LPVSLMLYPFGL. The chain crosses the membrane as a helical span at residues 260–275; it reads VYTIVAAVLGVGWLAL. Over 276 to 296 the chain is Cytoplasmic; that stretch reads GIAGFKMKDDIKWARLMFVYS. Residues 297–307 traverse the membrane as a helical segment; that stretch reads LNYLTILFVLM. Topologically, residues 308–312 are extracellular; that stretch reads VIVHF.

The protein belongs to the UbiA prenyltransferase family.

It is found in the cell membrane. The catalysed reaction is heme b + (2E,6E)-farnesyl diphosphate + H2O = Fe(II)-heme o + diphosphate. Its pathway is porphyrin-containing compound metabolism; heme O biosynthesis; heme O from protoheme: step 1/1. Functionally, converts protoheme IX and farnesyl diphosphate to heme O. This Alkalihalophilus pseudofirmus (strain ATCC BAA-2126 / JCM 17055 / OF4) (Bacillus pseudofirmus) protein is Protoheme IX farnesyltransferase (ctaB).